The following is a 179-amino-acid chain: Large ribosomal subunit protein bL27c (179 aa).

The N-terminal 51 residues, 1–51 (MAVSFSLVGAFKGLSLASSSSFLKGDFGAAFPVAPKFSVSFPLKSPLTIES), are a transit peptide targeting the chloroplast.

The protein belongs to the bacterial ribosomal protein bL27 family. As to quaternary structure, part of the 50S ribosomal subunit.

Its subcellular location is the plastid. The protein resides in the chloroplast. The protein is Large ribosomal subunit protein bL27c (RPL27) of Nicotiana tabacum (Common tobacco).